The chain runs to 402 residues: Elongation factor Tu (402 aa).

The region spanning 10-212 (KPHINIGTIG…AVDEYIPEPK (203 aa)) is the tr-type G domain. The G1 stretch occupies residues 19–26 (GHVDHGKT). GTP is bound at residue 19 to 26 (GHVDHGKT). Thr-26 provides a ligand contact to Mg(2+). The tract at residues 60 to 64 (GITIA) is G2. The G3 stretch occupies residues 81–84 (DCPG). GTP-binding positions include 81–85 (DCPGH) and 136–139 (NKED). The interval 136–139 (NKED) is G4. Positions 177-179 (SAF) are G5.

Belongs to the TRAFAC class translation factor GTPase superfamily. Classic translation factor GTPase family. EF-Tu/EF-1A subfamily. As to quaternary structure, monomer.

It localises to the cytoplasm. The catalysed reaction is GTP + H2O = GDP + phosphate + H(+). Functionally, GTP hydrolase that promotes the GTP-dependent binding of aminoacyl-tRNA to the A-site of ribosomes during protein biosynthesis. In Sulfurovum sp. (strain NBC37-1), this protein is Elongation factor Tu.